A 137-amino-acid chain; its full sequence is uncharacterized protein (137 aa).

The disordered stretch occupies residues 31-83; that stretch reads PASPINDKEKDKAGGRLPSGSEPRARAFCEAGADGEQGDPSPADTIKANQGHI.

This is an uncharacterized protein from Homo sapiens (Human).